The chain runs to 311 residues: Protoheme IX farnesyltransferase (311 aa).

8 helical membrane passes run 39-59, 61-81, 111-131, 133-153, 162-182, 187-207, 246-266, and 287-307; these read LLAM…PIGE, LPEI…AGAF, ALVL…VASP, AALF…MWSK, IGSV…SGDL, IIGL…AIAI, FFFV…SLIW, and FVFS…FSLL.

This sequence belongs to the UbiA prenyltransferase family. Protoheme IX farnesyltransferase subfamily. In terms of assembly, interacts with CtaA.

It localises to the cell membrane. It carries out the reaction heme b + (2E,6E)-farnesyl diphosphate + H2O = Fe(II)-heme o + diphosphate. It functions in the pathway porphyrin-containing compound metabolism; heme O biosynthesis; heme O from protoheme: step 1/1. In terms of biological role, converts heme B (protoheme IX) to heme O by substitution of the vinyl group on carbon 2 of heme B porphyrin ring with a hydroxyethyl farnesyl side group. This Shouchella clausii (strain KSM-K16) (Alkalihalobacillus clausii) protein is Protoheme IX farnesyltransferase.